A 417-amino-acid polypeptide reads, in one-letter code: NADH-quinone oxidoreductase subunit D 1 (417 aa).

Belongs to the complex I 49 kDa subunit family. As to quaternary structure, NDH-1 is composed of 14 different subunits. Subunits NuoB, C, D, E, F, and G constitute the peripheral sector of the complex.

It localises to the cell membrane. The catalysed reaction is a quinone + NADH + 5 H(+)(in) = a quinol + NAD(+) + 4 H(+)(out). In terms of biological role, NDH-1 shuttles electrons from NADH, via FMN and iron-sulfur (Fe-S) centers, to quinones in the respiratory chain. The immediate electron acceptor for the enzyme in this species is believed to be ubiquinone. Couples the redox reaction to proton translocation (for every two electrons transferred, four hydrogen ions are translocated across the cytoplasmic membrane), and thus conserves the redox energy in a proton gradient. The polypeptide is NADH-quinone oxidoreductase subunit D 1 (Roseiflexus castenholzii (strain DSM 13941 / HLO8)).